Reading from the N-terminus, the 254-residue chain is Flagellar L-ring protein 1 (254 aa).

A signal peptide spans 1–26 (MSPFSSAFRPRRIAISALLLAIGALA).

It belongs to the FlgH family. In terms of assembly, the basal body constitutes a major portion of the flagellar organelle and consists of four rings (L,P,S, and M) mounted on a central rod.

It localises to the cell outer membrane. It is found in the bacterial flagellum basal body. Assembles around the rod to form the L-ring and probably protects the motor/basal body from shearing forces during rotation. The chain is Flagellar L-ring protein 1 (flgH1) from Bradyrhizobium diazoefficiens (strain JCM 10833 / BCRC 13528 / IAM 13628 / NBRC 14792 / USDA 110).